The primary structure comprises 781 residues: Isoquinoline 1-oxidoreductase subunit beta (781 aa).

Heterodimer of an alpha chain and a beta chain.

The enzyme catalyses isoquinoline + A + H2O = isoquinolin-1(2H)-one + AH2. Functionally, specific towards N-containing N-heterocyclic substrates, including isoquinoline, isoquinolin-5-ol, phthalazine and quinazoline. In Brevundimonas diminuta (Pseudomonas diminuta), this protein is Isoquinoline 1-oxidoreductase subunit beta (iorB).